Consider the following 371-residue polypeptide: Anhydro-N-acetylmuramic acid kinase (371 aa).

9–16 (GTSMDGID) lines the ATP pocket.

It belongs to the anhydro-N-acetylmuramic acid kinase family.

It catalyses the reaction 1,6-anhydro-N-acetyl-beta-muramate + ATP + H2O = N-acetyl-D-muramate 6-phosphate + ADP + H(+). It functions in the pathway amino-sugar metabolism; 1,6-anhydro-N-acetylmuramate degradation. Its pathway is cell wall biogenesis; peptidoglycan recycling. Its function is as follows. Catalyzes the specific phosphorylation of 1,6-anhydro-N-acetylmuramic acid (anhMurNAc) with the simultaneous cleavage of the 1,6-anhydro ring, generating MurNAc-6-P. Is required for the utilization of anhMurNAc either imported from the medium or derived from its own cell wall murein, and thus plays a role in cell wall recycling. This is Anhydro-N-acetylmuramic acid kinase from Azorhizobium caulinodans (strain ATCC 43989 / DSM 5975 / JCM 20966 / LMG 6465 / NBRC 14845 / NCIMB 13405 / ORS 571).